We begin with the raw amino-acid sequence, 504 residues long: Signal recognition particle subunit SRP54 (504 aa).

Residues 1-295 (MVLADLGRKI…KTQPFISKLL (295 aa)) form an NG domain region. GTP-binding positions include 108–115 (GLQGSGKT), 190–194 (DTSGR), and 248–251 (TKLD). Positions 296–504 (GMGDIEGLID…MKGMMGFNNM (209 aa)) are M-domain.

It belongs to the GTP-binding SRP family. SRP54 subfamily. As to quaternary structure, component of a signal recognition particle (SRP) complex that consists of a 7SL RNA molecule of 300 nucleotides and six protein subunits: SRP72, SRP68, SRP54, SRP19, SRP14 and SRP9. Interacts with RNPS1. Interacts with the SRP receptor subunit SRPRA.

Its subcellular location is the nucleus speckle. It localises to the cytoplasm. It is found in the endoplasmic reticulum. It carries out the reaction GTP + H2O = GDP + phosphate + H(+). Functionally, component of the signal recognition particle (SRP) complex, a ribonucleoprotein complex that mediates the cotranslational targeting of secretory and membrane proteins to the endoplasmic reticulum (ER). As part of the SRP complex, associates with the SRP receptor (SR) component SRPRA to target secretory proteins to the endoplasmic reticulum membrane. Binds to the signal sequence of presecretory proteins when they emerge from the ribosomes. Displays basal GTPase activity, and stimulates reciprocal GTPase activation of the SR subunit SRPRA. Forms a guanosine 5'-triphosphate (GTP)-dependent complex with the SR subunit SRPRA. SR compaction and GTPase mediated rearrangement of SR drive SRP-mediated cotranslational protein translocation into the ER. Requires the presence of SRP9/SRP14 and/or SRP19 to stably interact with RNA. Plays a role in proliferation and differentiation of granulocytic cells, neutrophils migration capacity and exocrine pancreas development. The protein is Signal recognition particle subunit SRP54 of Homo sapiens (Human).